The sequence spans 75 residues: U6-lycotoxin-Ls1g (75 aa).

Residues 1-21 form the signal peptide; it reads MKLLLFTALVLVVISLIEVEA. A propeptide spanning residues 22-25 is cleaved from the precursor; sequence ENER.

This sequence belongs to the neurotoxin 19 (CSTX) family. 06 (U6-Lctx) subfamily. Post-translationally, contains 4 disulfide bonds. In terms of tissue distribution, expressed by the venom gland.

The protein resides in the secreted. The sequence is that of U6-lycotoxin-Ls1g from Lycosa singoriensis (Wolf spider).